Reading from the N-terminus, the 480-residue chain is Cytochrome b-c1 complex subunit 1, mitochondrial (480 aa).

The N-terminal 34 residues, 1-34 (MAASAVCRAACSGTQALLRTCRSPALLRLPALRG), are a transit peptide targeting the mitochondrion. N6-acetyllysine is present on residues K111 and K138. Residue K163 is modified to N6-acetyllysine; alternate. An N6-succinyllysine; alternate modification is found at K163. S212 is modified (phosphoserine). Position 214 is a phosphothreonine (T214).

It belongs to the peptidase M16 family. UQCRC1/QCR1 subfamily. As to quaternary structure, component of the ubiquinol-cytochrome c oxidoreductase (cytochrome b-c1 complex, complex III, CIII), a multisubunit enzyme composed of 11 subunits. The complex is composed of 3 respiratory subunits cytochrome b, cytochrome c1 and Rieske protein UQCRFS1, 2 core protein subunits UQCRC1/QCR1 and UQCRC2/QCR2, and 6 low-molecular weight protein subunits UQCRH/QCR6, UQCRB/QCR7, UQCRQ/QCR8, UQCR10/QCR9, UQCR11/QCR10 and subunit 9, the cleavage product of Rieske protein UQCRFS1. The complex exists as an obligatory dimer and forms supercomplexes (SCs) in the inner mitochondrial membrane with NADH-ubiquinone oxidoreductase (complex I, CI) and cytochrome c oxidase (complex IV, CIV), resulting in different assemblies (supercomplex SCI(1)III(2)IV(1) and megacomplex MCI(2)III(2)IV(2)). Interacts with UQCC6. Interacts with STMP1.

The protein resides in the mitochondrion inner membrane. Component of the ubiquinol-cytochrome c oxidoreductase, a multisubunit transmembrane complex that is part of the mitochondrial electron transport chain which drives oxidative phosphorylation. The respiratory chain contains 3 multisubunit complexes succinate dehydrogenase (complex II, CII), ubiquinol-cytochrome c oxidoreductase (cytochrome b-c1 complex, complex III, CIII) and cytochrome c oxidase (complex IV, CIV), that cooperate to transfer electrons derived from NADH and succinate to molecular oxygen, creating an electrochemical gradient over the inner membrane that drives transmembrane transport and the ATP synthase. The cytochrome b-c1 complex catalyzes electron transfer from ubiquinol to cytochrome c, linking this redox reaction to translocation of protons across the mitochondrial inner membrane, with protons being carried across the membrane as hydrogens on the quinol. In the process called Q cycle, 2 protons are consumed from the matrix, 4 protons are released into the intermembrane space and 2 electrons are passed to cytochrome c. The 2 core subunits UQCRC1/QCR1 and UQCRC2/QCR2 are homologous to the 2 mitochondrial-processing peptidase (MPP) subunits beta-MPP and alpha-MPP respectively, and they seem to have preserved their MPP processing properties. May be involved in the in situ processing of UQCRFS1 into the mature Rieske protein and its mitochondrial targeting sequence (MTS)/subunit 9 when incorporated into complex III. Seems to play an important role in the maintenance of proper mitochondrial function in nigral dopaminergic neurons. The protein is Cytochrome b-c1 complex subunit 1, mitochondrial (Uqcrc1) of Rattus norvegicus (Rat).